We begin with the raw amino-acid sequence, 205 residues long: Probable GTP-binding protein EngB (205 aa).

Residues 8 to 195 (RDAEVVLIGR…NEAVRHHLHE (188 aa)) form the EngB-type G domain. Residues 16 to 23 (GRSNVGKS), 41 to 45 (GVTRS), 60 to 63 (DLPG), 140 to 143 (NKMD), and 175 to 177 (ISA) each bind GTP. Mg(2+)-binding residues include Ser-23 and Thr-43.

The protein belongs to the TRAFAC class TrmE-Era-EngA-EngB-Septin-like GTPase superfamily. EngB GTPase family. It depends on Mg(2+) as a cofactor.

Its function is as follows. Necessary for normal cell division and for the maintenance of normal septation. This chain is Probable GTP-binding protein EngB, found in Haloarcula marismortui (strain ATCC 43049 / DSM 3752 / JCM 8966 / VKM B-1809) (Halobacterium marismortui).